A 179-amino-acid polypeptide reads, in one-letter code: ATP-dependent protease subunit HslV (179 aa).

T7 is an active-site residue. Positions 162, 165, and 168 each coordinate Na(+).

Belongs to the peptidase T1B family. HslV subfamily. In terms of assembly, a double ring-shaped homohexamer of HslV is capped on each side by a ring-shaped HslU homohexamer. The assembly of the HslU/HslV complex is dependent on binding of ATP.

The protein localises to the cytoplasm. It carries out the reaction ATP-dependent cleavage of peptide bonds with broad specificity.. Its activity is regulated as follows. Allosterically activated by HslU binding. Functionally, protease subunit of a proteasome-like degradation complex believed to be a general protein degrading machinery. In Nitrosococcus oceani (strain ATCC 19707 / BCRC 17464 / JCM 30415 / NCIMB 11848 / C-107), this protein is ATP-dependent protease subunit HslV.